A 423-amino-acid polypeptide reads, in one-letter code: Zinc finger protein Gfi-1 (423 aa).

Positions 1 to 20 (MPRSFLVKSKKAHSYHQPRS) are SNAG domain. Residues 1–76 (MPRSFLVKSK…DRASASPNSC (76 aa)) are disordered. 2 positions are modified to phosphoserine: Ser-20 and Ser-57. Over residues 48–57 (SKMEPRERLS) the composition is skewed to basic and acidic residues. Residues 141–258 (RQCSALERSA…LLLGGGSYKC (118 aa)) are required for interaction with RELA. 6 C2H2-type zinc fingers span residues 256-279 (YKCI…RRSH), 285-307 (FACE…KAVH), 313-335 (FDCK…LLIH), 341-363 (YPCQ…TFIH), 369-391 (HKCQ…SRKH), and 397-420 (FGCD…ETQH).

Interacts (via the zinc-finger domain) with ARIH2; the interaction prevents GFI1 ubiquitination and proteasomal degradation. Forms a complex with EHMT2 and HDAC1 to promote 'Lys-9' dimethylation of H3 (H3K9Me2) and repress expression of target genes. Interacts directly with EHMT2. Interacts with RUNX1T1; the interaction represses HDAC-mediated transcriptional activity. Interacts (via the C-terminal zinc fingers) with ZBTB17; the interaction results in the recruitment of GFI1 to the CDKN1A/p21 and CDKNIB promoters and repression of transcription. Interacts with U2AF1L4. Component of RCOR-GFI-KDM1A-HDAC complexes. Interacts directly with RCOR1, KDM1A and HDAC2. Also interacts with HDAC1. Component of the GFI1-AJUBA-HDAC1 repressor complex. Interacts directly with AJUBA (via its LIM domains); the interaction results in the HDAC-dependent corepression of a subset of GFI1 target genes and, occurs independently of the SNAG domain. Interacts with SPI1; the interaction inhibits SPI1 transcriptional activity targeted at macrophage-specific genes, repressing macrophage differentiation of myeloid progenitor cells and promoting granulocyte commitment. Interacts with PIAS3; the interaction relieves the inhibitory effect of PIAS3 on STAT3-mediated transcriptional activity. Interacts with RELA; the interaction occurs on liposaccharide (LPS) stimulation and controls RELA DNA binding activity and regulates endotoxin-mediated TOLL-like receptor inflammatory response. In terms of processing, ubiquitinated.

It is found in the nucleus. In terms of biological role, transcription repressor essential for hematopoiesis. Functions in a cell-context and development-specific manner. Binds to 5'-TAAATCAC[AT]GCA-3' in the promoter region of a large number of genes. Component of several complexes, including the EHMT2-GFI1-HDAC1, AJUBA-GFI1-HDAC1 and RCOR-GFI-KDM1A-HDAC complexes, that suppress, via histone deacetylase (HDAC) recruitment, a number of genes implicated in multilineage blood cell development. Regulates neutrophil differentiation, promotes proliferation of lymphoid cells, and is required for granulocyte development. Inhibits SPI1 transcriptional activity at macrophage-specific genes, repressing macrophage differentiation of myeloid progenitor cells and promoting granulocyte commitment. Mediates, together with U2AF1L4, the alternative splicing of CD45 and controls T-cell receptor signaling. Regulates the endotoxin-mediated Toll-like receptor (TLR) inflammatory response by antagonizing RELA. Cooperates with CBFA2T2 to regulate ITGB1-dependent neurite growth. Controls cell-cycle progression by repressing CDKNIA/p21 transcription in response to TGFB1 via recruitment of GFI1 by ZBTB17 to the CDKNIA/p21 and CDKNIB promoters. Required for the maintenance of inner ear hair cells. In addition to its role in transcription, acts as a substrate adapter for PRMT1 in the DNA damage response. Facilitates the recognition of TP53BP1 and MRE11 substrates by PRMT1, promoting their methylation and the DNA damage response. The chain is Zinc finger protein Gfi-1 (Gfi1) from Mus musculus (Mouse).